The sequence spans 193 residues: WYSSMFAANIKQEPISHHHHHHHAHHSHHQHSHDSNSNSNASSPHQSPLPSPNPPSSNNLQLEQYLKQQQQQQQQQQPMDTLCAGAMTPSPSNNDQNSRLRPPGLPNPMQTIMPANMRPSPTATTTATTTAAAASTTTAATVALQSNDKLQALTPPMDVTPPKSPAKSQQSCAEPEKEHDLMSNSSEDMKYMA.

2 disordered regions span residues 16–126 and 146–193; these read SHHH…ATTT and SNDK…KYMA. The span at 17-31 shows a compositional bias: basic residues; sequence HHHHHHHAHHSHHQH. Low complexity-rich tracts occupy residues 35 to 46 and 56 to 77; these read SNSNSNASSPHQ and SSNN…QQQQ. Residues 89–99 are compositionally biased toward polar residues; that stretch reads PSPSNNDQNSR. Over residues 174-193 the composition is skewed to basic and acidic residues; it reads EPEKEHDLMSNSSEDMKYMA.

It belongs to the hunchback C2H2-type zinc-finger protein family.

The protein resides in the nucleus. Gap class segmentation protein that controls development of head structures. The sequence is that of Protein hunchback (hb) from Drosophila iki (Fruit fly).